We begin with the raw amino-acid sequence, 569 residues long: WD repeat-containing protein 20 (569 aa).

At A2 the chain carries N-acetylalanine. WD repeat units follow at residues 94–138, 139–210, 211–252, 253–331, 332–426, 427–523, and 524–559; these read RIYK…KETS, KLFN…KSTR, NPLL…FDSV, ELHG…SGSD, EDFQ…NSVP, PPLP…VPLL, and EPLICKKIAHERLTVLIFLEDCIVTACQEGFICTWG. Phosphoserine occurs at positions 357 and 360. 2 stretches are compositionally biased toward polar residues: residues 405–423 and 431–445; these read NATSPPAGSNGNSVTTPGN and RSNSLPHSAVSNAGS. Residues 405–445 form a disordered region; the sequence is NATSPPAGSNGNSVTTPGNSVPPPLPRSNSLPHSAVSNAGS. Phosphoserine occurs at positions 432, 434, and 465. The segment at 450–468 is mediates XPO1-dependent nuclear export of WDR20-USP12 complexes; the sequence is MDGAIASGVSKFATLSLHD.

In terms of assembly, interacts with USP12; promotes translocation of USP12/WDR20 to the plasma membrane. Component of the USP12/WDR20/WDR48 deubiquitinating complex. Interacts with USP46; contributes to the cytoplasmic localization of the USP46/WDR20 complex. Component of the USP12/DMWD/WDR48 deubiquitinating complex.

Its subcellular location is the cytoplasm. It is found in the nucleus. In terms of biological role, regulator of deubiquitinating complexes. Activates deubiquitinating activity of complexes containing USP12. Anchors at the base of the ubiquitin-contacting loop of USP12 and remotely modulates the catalytic center of the enzyme. Regulates shuttling of the USP12 deubiquitinase complex between the plasma membrane, cytoplasm and nucleus. The protein is WD repeat-containing protein 20 (WDR20) of Homo sapiens (Human).